The sequence spans 703 residues: Methionine--tRNA ligase (703 aa).

Positions 12–22 (PYANGPLHIGH) match the 'HIGH' region motif. 4 residues coordinate Zn(2+): C143, C146, C156, and C159. Residues 331–335 (KMSKT) carry the 'KMSKS' region motif. Residue K334 coordinates ATP. Low complexity-rich tracts occupy residues 556 to 568 (AAPQAAEARPAKG) and 577 to 594 (EAPAATQAAAPSAGAAES). Disordered stretches follow at residues 556–594 (AAPQAAEARPAKGAKTEKKPAEAPAATQAAAPSAGAAES) and 682–703 (GPGGKELSLLDPGDVAPGSEVK). Residues 602–703 (DFAKVVLKAG…GDVAPGSEVK (102 aa)) form the tRNA-binding domain.

Belongs to the class-I aminoacyl-tRNA synthetase family. MetG type 1 subfamily. As to quaternary structure, homodimer. It depends on Zn(2+) as a cofactor.

Its subcellular location is the cytoplasm. The catalysed reaction is tRNA(Met) + L-methionine + ATP = L-methionyl-tRNA(Met) + AMP + diphosphate. Functionally, is required not only for elongation of protein synthesis but also for the initiation of all mRNA translation through initiator tRNA(fMet) aminoacylation. The chain is Methionine--tRNA ligase from Myxococcus xanthus (strain DK1622).